The primary structure comprises 152 residues: Leptin (152 aa).

Positions M1–A26 are cleaved as a signal peptide. C109 and C152 are disulfide-bonded.

This sequence belongs to the leptin family. In terms of tissue distribution, expressed mostly in the liver.

The protein resides in the secreted. Functionally, may function as part of a signaling pathway that acts to regulate the size of the body fat depot. The polypeptide is Leptin (lep) (Takifugu rubripes (Japanese pufferfish)).